A 114-amino-acid chain; its full sequence is Dolichyl-diphosphooligosaccharide--protein glycosyltransferase subunit DAD1 (114 aa).

The Cytoplasmic portion of the chain corresponds to 1–30 (MPRATSDAKLLIQSLGKAYAATPTNLKIID). Residues 31–51 (LYVVFAVATALIQVVYMGIVG) traverse the membrane as a helical segment. Topologically, residues 52 to 54 (SFP) are lumenal. Residues 55–75 (FNSFLSGVLSCIGTAVLAVCL) traverse the membrane as a helical segment. Residues 76–93 (RIQVNKDNKEFKDLPPER) are Cytoplasmic-facing. Residues 94–114 (AFADFVLCNLVLHLVIMNFLG) traverse the membrane as a helical segment.

The protein belongs to the DAD/OST2 family. As to quaternary structure, component of the oligosaccharyltransferase (OST) complex.

The protein resides in the endoplasmic reticulum membrane. Its pathway is protein modification; protein glycosylation. Its function is as follows. Subunit of the oligosaccharyl transferase (OST) complex that catalyzes the initial transfer of a defined glycan (Glc(3)Man(9)GlcNAc(2) in eukaryotes) from the lipid carrier dolichol-pyrophosphate to an asparagine residue within an Asn-X-Ser/Thr consensus motif in nascent polypeptide chains, the first step in protein N-glycosylation. N-glycosylation occurs cotranslationally and the complex associates with the Sec61 complex at the channel-forming translocon complex that mediates protein translocation across the endoplasmic reticulum (ER). All subunits are required for a maximal enzyme activity. The chain is Dolichyl-diphosphooligosaccharide--protein glycosyltransferase subunit DAD1 (DAD1) from Oryza sativa subsp. indica (Rice).